Reading from the N-terminus, the 518-residue chain is Putative BTB/POZ domain and WD-repeat protein R731 (518 aa).

In terms of domain architecture, BTB spans Thr22–Asn92. The disordered stretch occupies residues Asn224 to Asp246. Acidic residues predominate over residues Ser228–Asp246. WD repeat units lie at residues Asn391 to Lys430 and Phe437 to Asn475.

This sequence belongs to the mimivirus BTB/WD family.

This Acanthamoeba polyphaga (Amoeba) protein is Putative BTB/POZ domain and WD-repeat protein R731.